We begin with the raw amino-acid sequence, 126 residues long: MLTFAPLNFLAIGVGATLGAWLRWVPGLRLNGAGWPWGTLTANLVGGYLIGVMVALIASHPEWPAWIRLAAVTGFLGGLTTFSTFSAETVDMLERGVYATAAAYAGASLAGSLAMTGLATVRLLLR.

4 consecutive transmembrane segments (helical) span residues 2 to 22, 37 to 57, 65 to 85, and 101 to 121; these read LTFA…GAWL, WGTL…VALI, AWIR…FSTF, and AAAY…LATV. Positions 77 and 80 each coordinate Na(+).

The protein belongs to the fluoride channel Fluc/FEX (TC 1.A.43) family.

The protein localises to the cell inner membrane. It carries out the reaction fluoride(in) = fluoride(out). With respect to regulation, na(+) is not transported, but it plays an essential structural role and its presence is essential for fluoride channel function. Its function is as follows. Fluoride-specific ion channel. Important for reducing fluoride concentration in the cell, thus reducing its toxicity. The chain is Fluoride-specific ion channel FluC from Bordetella parapertussis (strain 12822 / ATCC BAA-587 / NCTC 13253).